Here is a 347-residue protein sequence, read N- to C-terminus: A-type ATP synthase subunit C (347 aa).

This sequence belongs to the V-ATPase V0D/AC39 subunit family. Has multiple subunits with at least A(3), B(3), C, D, E, F, H, I and proteolipid K(x).

Its subcellular location is the cell membrane. Its function is as follows. Component of the A-type ATP synthase that produces ATP from ADP in the presence of a proton gradient across the membrane. This Haloquadratum walsbyi (strain DSM 16790 / HBSQ001) protein is A-type ATP synthase subunit C.